The chain runs to 556 residues: Glycosyl hydrolase 5 family protein (556 aa).

Residues 1–28 (MTSAGVAPTALRLLTALLLLLVAAPSHS) form the signal peptide. N-linked (GlcNAc...) asparagine glycans are attached at residues N102 and N113. The active-site Proton donor/acceptor is the E208. 3 N-linked (GlcNAc...) asparagine glycosylation sites follow: N212, N290, and N307. E473 functions as the Nucleophile in the catalytic mechanism. N474 and N479 each carry an N-linked (GlcNAc...) asparagine glycan.

It belongs to the glycosyl hydrolase 5 (cellulase A) family. Post-translationally, glycosylated.

Functionally, may have glycosyl hydrolase activity. The protein is Glycosyl hydrolase 5 family protein of Chamaecyparis obtusa (Hinoki false-cypress).